Reading from the N-terminus, the 96-residue chain is Putative pterin-4-alpha-carbinolamine dehydratase (96 aa).

It belongs to the pterin-4-alpha-carbinolamine dehydratase family.

The enzyme catalyses (4aS,6R)-4a-hydroxy-L-erythro-5,6,7,8-tetrahydrobiopterin = (6R)-L-erythro-6,7-dihydrobiopterin + H2O. This Prochlorococcus marinus (strain MIT 9303) protein is Putative pterin-4-alpha-carbinolamine dehydratase.